Here is a 560-residue protein sequence, read N- to C-terminus: NAD-dependent malic enzyme (560 aa).

Residue Y100 is the Proton donor of the active site. R153 contributes to the NAD(+) binding site. K171 functions as the Proton acceptor in the catalytic mechanism. Residues E242, D243, and D266 each coordinate a divalent metal cation. NAD(+) is bound by residues D266 and N413.

Belongs to the malic enzymes family. Homotetramer. Requires Mg(2+) as cofactor. Mn(2+) serves as cofactor.

The catalysed reaction is (S)-malate + NAD(+) = pyruvate + CO2 + NADH. The enzyme catalyses oxaloacetate + H(+) = pyruvate + CO2. The protein is NAD-dependent malic enzyme of Psychrobacter cryohalolentis (strain ATCC BAA-1226 / DSM 17306 / VKM B-2378 / K5).